The primary structure comprises 298 residues: ATP phosphoribosyltransferase (298 aa).

The protein belongs to the ATP phosphoribosyltransferase family. Long subfamily. The cofactor is Mg(2+).

It localises to the cytoplasm. The catalysed reaction is 1-(5-phospho-beta-D-ribosyl)-ATP + diphosphate = 5-phospho-alpha-D-ribose 1-diphosphate + ATP. The protein operates within amino-acid biosynthesis; L-histidine biosynthesis; L-histidine from 5-phospho-alpha-D-ribose 1-diphosphate: step 1/9. Feedback inhibited by histidine. Functionally, catalyzes the condensation of ATP and 5-phosphoribose 1-diphosphate to form N'-(5'-phosphoribosyl)-ATP (PR-ATP). Has a crucial role in the pathway because the rate of histidine biosynthesis seems to be controlled primarily by regulation of HisG enzymatic activity. The polypeptide is ATP phosphoribosyltransferase (Vibrio vulnificus (strain CMCP6)).